The following is a 358-amino-acid chain: Peptide chain release factor 1 (358 aa).

The residue at position 235 (glutamine 235) is an N5-methylglutamine.

It belongs to the prokaryotic/mitochondrial release factor family. In terms of processing, methylated by PrmC. Methylation increases the termination efficiency of RF1.

The protein localises to the cytoplasm. Functionally, peptide chain release factor 1 directs the termination of translation in response to the peptide chain termination codons UAG and UAA. The chain is Peptide chain release factor 1 from Neisseria gonorrhoeae (strain NCCP11945).